The sequence spans 449 residues: Xylose isomerase (449 aa).

Catalysis depends on residues H103 and D106. E234, E270, H273, D298, D309, D311, and D342 together coordinate Mg(2+).

It belongs to the xylose isomerase family. As to quaternary structure, homotetramer. Mg(2+) serves as cofactor.

It localises to the cytoplasm. The catalysed reaction is alpha-D-xylose = alpha-D-xylulofuranose. The protein is Xylose isomerase of Levilactobacillus brevis (Lactobacillus brevis).